A 267-amino-acid polypeptide reads, in one-letter code: MEMO1 family protein aq_890 (267 aa).

Belongs to the MEMO1 family.

The sequence is that of MEMO1 family protein aq_890 from Aquifex aeolicus (strain VF5).